Here is a 572-residue protein sequence, read N- to C-terminus: Urease subunit alpha (572 aa).

Positions Gly136 to Phe572 constitute a Urease domain. His141, His143, and Lys224 together coordinate Ni(2+). The residue at position 224 (Lys224) is an N6-carboxylysine. His226 is a substrate binding site. His253 and His279 together coordinate Ni(2+). Residue His327 is the Proton donor of the active site. Ni(2+) is bound at residue Asp367.

This sequence belongs to the metallo-dependent hydrolases superfamily. Urease alpha subunit family. Heterotrimer of UreA (gamma), UreB (beta) and UreC (alpha) subunits. Three heterotrimers associate to form the active enzyme. Requires Ni cation as cofactor. In terms of processing, carboxylation allows a single lysine to coordinate two nickel ions.

The protein resides in the cytoplasm. It carries out the reaction urea + 2 H2O + H(+) = hydrogencarbonate + 2 NH4(+). It participates in nitrogen metabolism; urea degradation; CO(2) and NH(3) from urea (urease route): step 1/1. The protein is Urease subunit alpha of Actinobacillus pleuropneumoniae serotype 7 (strain AP76).